The sequence spans 392 residues: Glutamine synthetase (392 aa).

The 81-residue stretch at Val26–Arg106 folds into the GS beta-grasp domain. One can recognise a GS catalytic domain in the interval Leu113–Phe392. Position 134 (Glu134) interacts with ATP. Glu134, Glu136, Glu196, and Glu203 together coordinate Mn(2+). Residue Glu203–Pro208 participates in ATP binding. Asn246 to Trp247 provides a ligand contact to L-glutamate. His253 is a Mn(2+) binding site. Residues Asn255–Ser257, Arg319, and Arg324 each bind ATP. Arg319 provides a ligand contact to L-glutamate. Tyr336–Glu338 is a binding site for ADP. Glu338 contacts Mn(2+). L-glutamate is bound at residue Arg340.

This sequence belongs to the glutamine synthetase family. Requires Mg(2+) as cofactor. Mn(2+) is required as a cofactor.

Its subcellular location is the cytoplasm. The protein localises to the cytosol. The protein resides in the microsome. It is found in the mitochondrion. The enzyme catalyses L-glutamate + NH4(+) + ATP = L-glutamine + ADP + phosphate + H(+). Its function is as follows. Glutamine synthetase that catalyzes the ATP-dependent conversion of glutamate and ammonia to glutamine. The sequence is that of Glutamine synthetase from Xenopus laevis (African clawed frog).